We begin with the raw amino-acid sequence, 137 residues long: Large ribosomal subunit protein uL16 (137 aa).

The protein belongs to the universal ribosomal protein uL16 family. Part of the 50S ribosomal subunit.

In terms of biological role, binds 23S rRNA and is also seen to make contacts with the A and possibly P site tRNAs. This chain is Large ribosomal subunit protein uL16, found in Leptospira biflexa serovar Patoc (strain Patoc 1 / Ames).